Consider the following 245-residue polypeptide: Orotidine 5'-phosphate decarboxylase (245 aa).

Substrate is bound by residues Asp22, Lys44, 71–80, Thr131, Arg192, Gln201, Gly221, and Arg222; that span reads DLKFHDIPNT. The active-site Proton donor is the Lys73.

It belongs to the OMP decarboxylase family. Type 1 subfamily. Homodimer.

It carries out the reaction orotidine 5'-phosphate + H(+) = UMP + CO2. It functions in the pathway pyrimidine metabolism; UMP biosynthesis via de novo pathway; UMP from orotate: step 2/2. In terms of biological role, catalyzes the decarboxylation of orotidine 5'-monophosphate (OMP) to uridine 5'-monophosphate (UMP). The sequence is that of Orotidine 5'-phosphate decarboxylase from Shigella flexneri.